The following is a 906-amino-acid chain: MTDQNFSNLVPVNIEDEMKVSYLDYAMSVIVSRAIPDVRDGLKPVHRRIIYSMYEAGNHASKPYRKSARIVGDVMGKYHPHGDSAIYDSLVRMAQDFSLRLPLVDGQGNFGSMDGDAAAAMRYTESRMAKVSHKLVEDIDKETVSFNPNYDGSEEEPSVLPAMFPNLLVNGSGGIAVGMATNIPPHNLGEVIDACCLYIDNNDIEILDLLEVVKGPDFPTGSMILGISGIRSAYLTGRGSIIMRGRAEIENIGNSRQAIIITEIPYMVNKARLVEKIAEMVKEKRIEGISDLRDESNKNGVRIFIELKKDVVVEVVLNQIYACTQLQTSFGVIMLALKDGLPKVMNLKEVIAAFVSFREVVITNRTIYLLNKARDRAHILLGLTIAVSNIDEIIRIIKASNNPNAAKQELMARSWDALNILPLVKLVDDKAMLNEQGKCSFTEVQAKAILEMRLQRLTAMEKNKLEEDLKNLATEITEYLNILGSRTRLLEILKEELIKVKEEFATPRLTSIEFGEFDQDIEDLIQREEMVVTVTLGGYIKRVPLSSYRAQKRGGKGRSGLSMRDEDITTQVFVGSTHTPMLFFSNIGQVYSLKLYKLPLSNPQGKGRPMVNILPLKENEHITNIMPLPENQDEWDNLNIMFATAKGNIRRSDLLDFKKIQSNGKIAIRLDEDDKLIDVKPCKEDEHILLATKAGKALRFPVESLRVIKSRTSDGVRGMKLAKEDSVISMTVLKGISSTKEDRDAYLTVPWEKRLEIAKGEEFNLEELGVTLTADSILEMANSEEFILTVTENGFGKRSSAYGYRITDRGGSGIINMDINDKTGLVVGVMPVKMDDELMLITNSGKLIRCKLESVRITGRNTSGVILFKLDDGEKVVSVSLIAETSESEEDSELEEDLEQAEEVYT.

The region spanning isoleucine 35–leucine 524 is the Topo IIA-type catalytic domain. The active-site O-(5'-phospho-DNA)-tyrosine intermediate is the tyrosine 123. The GyrA-box motif lies at glutamine 551–glycine 557. The segment at serine 886–threonine 906 is disordered.

Belongs to the type II topoisomerase GyrA/ParC subunit family. In terms of assembly, heterotetramer, composed of two GyrA and two GyrB chains. In the heterotetramer, GyrA contains the active site tyrosine that forms a transient covalent intermediate with DNA, while GyrB binds cofactors and catalyzes ATP hydrolysis.

It localises to the cytoplasm. It catalyses the reaction ATP-dependent breakage, passage and rejoining of double-stranded DNA.. In terms of biological role, a type II topoisomerase that negatively supercoils closed circular double-stranded (ds) DNA in an ATP-dependent manner to modulate DNA topology and maintain chromosomes in an underwound state. Negative supercoiling favors strand separation, and DNA replication, transcription, recombination and repair, all of which involve strand separation. Also able to catalyze the interconversion of other topological isomers of dsDNA rings, including catenanes and knotted rings. Type II topoisomerases break and join 2 DNA strands simultaneously in an ATP-dependent manner. The sequence is that of DNA gyrase subunit A from Rickettsia felis (strain ATCC VR-1525 / URRWXCal2) (Rickettsia azadi).